The following is a 209-amino-acid chain: FMN-dependent NADH:quinone oxidoreductase (209 aa).

FMN is bound by residues Ser-10, 16-18, and 98-101; these read SHS and MWNF.

The protein belongs to the azoreductase type 1 family. In terms of assembly, homodimer. The cofactor is FMN.

The catalysed reaction is 2 a quinone + NADH + H(+) = 2 a 1,4-benzosemiquinone + NAD(+). The enzyme catalyses N,N-dimethyl-1,4-phenylenediamine + anthranilate + 2 NAD(+) = 2-(4-dimethylaminophenyl)diazenylbenzoate + 2 NADH + 2 H(+). Functionally, quinone reductase that provides resistance to thiol-specific stress caused by electrophilic quinones. Its function is as follows. Also exhibits azoreductase activity. Catalyzes the reductive cleavage of the azo bond in aromatic azo compounds to the corresponding amines. The polypeptide is FMN-dependent NADH:quinone oxidoreductase (Nitratidesulfovibrio vulgaris (strain ATCC 29579 / DSM 644 / CCUG 34227 / NCIMB 8303 / VKM B-1760 / Hildenborough) (Desulfovibrio vulgaris)).